The chain runs to 606 residues: MTADAHLFSASDLEAATRIAEPDFELLDALIRTDDPDDQAHTLARVALSAFDNYYAVSRRIPALAKAAFYARDWPATVRLSKIRIGLYTACIDQLVPLLKAGLPELANDEQVWVRAEAELLAAIAGRYEADFAFAFWQSLRRKLVSDEWRPVSYDTGPAARPPAAIAAVVRTIAATLPIQPEVIRNVLDAAGFTGPWRDLDGDAALAAAAIEAALEPLSPRAGETAKIEIAESGFFRNRGACLVGRIRLRDRGDMPPRNIPLLVALLNEDDGLVVDAVLCDSDELQFAFSSTLANYHATNPRYHELARLLHELMPKRPLGTQYSCIGFHHLGKVAVMNEILTEHRRSKEKLATAPGFKGTVAIAFTMPCSAYVLKIIRDHPTDDYKFDYFDGLDAVLRKYNLVHEIDRAGSMLDNIIYSNVKLARTMFAPDLLDELLEAGIGTVTLERDALVFRHLIVQIKLTPLPLYLTTAAAADARAAVINLGDCIKNNAAADIFNKDLDGRNYGVSRIRKVYLFDYDAVEQLTEVKVRSTPPMPRAEDEDGVVFRPAQMLEGLRIDDPGLRRAFRDAHPELMQPDYWEGMQHALRAGKVPKVMNYPTSRRLRR.

Residues 354-360 and lysine 375 contribute to the ATP site; that span reads APGFKGT. The active site involves aspartate 414.

The protein belongs to the AceK family.

It is found in the cytoplasm. It catalyses the reaction L-seryl-[isocitrate dehydrogenase] + ATP = O-phospho-L-seryl-[isocitrate dehydrogenase] + ADP + H(+). In terms of biological role, bifunctional enzyme which can phosphorylate or dephosphorylate isocitrate dehydrogenase (IDH) on a specific serine residue. This is a regulatory mechanism which enables bacteria to bypass the Krebs cycle via the glyoxylate shunt in response to the source of carbon. When bacteria are grown on glucose, IDH is fully active and unphosphorylated, but when grown on acetate or ethanol, the activity of IDH declines drastically concomitant with its phosphorylation. This Rhodopseudomonas palustris (strain BisB5) protein is Isocitrate dehydrogenase kinase/phosphatase.